The sequence spans 466 residues: Gamma-aminobutyric acid permease (466 aa).

Over 2–20 the chain is Cytoplasmic; sequence GQSSQPHELGGGLKSRHVT. The next 2 helical transmembrane spans lie at 21-41 and 42-62; these read MLSI…VAIA and EAGP…VMIM. The Cytoplasmic segment spans residues 63 to 96; it reads RMLAEMAVATPDTGSFSTYADKAIGRWAGYTIGW. A helical transmembrane segment spans residues 97–117; the sequence is LYWWFWVLVIPLEANIAAMIL. Position 118 (H118) is a topological domain, periplasmic. Residues 119–139 form a helical membrane-spanning segment; sequence SWVPGIPIWLFSLVITLALTG. Residues 140 to 153 lie on the Cytoplasmic side of the membrane; sequence SNLLSVKNYGEFEF. Residues 154-174 form a helical membrane-spanning segment; sequence WLALCKVIAILAFIFLGAVAI. Residues 175–199 lie on the Periplasmic side of the membrane; sequence SGFYPYAEVSGISRLWDSGGFMPNG. Residues 200–220 traverse the membrane as a helical segment; it reads FGAVLSAMLITMFSFMGAEIV. The Cytoplasmic portion of the chain corresponds to 221-246; it reads TIAAAESDTPEKHIVRATNSVIWRIS. The helical transmembrane segment at 247–267 threads the bilayer; sequence IFYLCSIFVVVALIPWNMPGL. The Periplasmic portion of the chain corresponds to 268–286; that stretch reads KAVGSYRSVLELLNIPHAK. Residues 287 to 307 form a helical membrane-spanning segment; sequence LIMDCVILLSVTSCLNSALYT. Residues 308–334 lie on the Cytoplasmic side of the membrane; that stretch reads ASRMLYSLSRRGDAPAVMGKINRSKTP. A helical transmembrane segment spans residues 335–355; that stretch reads YVAVLLSTGAAFLTVVVNYYA. The Periplasmic segment spans residues 356–358; that stretch reads PAK. A helical membrane pass occupies residues 359–379; it reads VFKFLIDSSGAIALLVYLVIA. Residues 380 to 402 are Cytoplasmic-facing; the sequence is VSQLRMRKILRAEGSEIRLRMWL. Residues 403-423 traverse the membrane as a helical segment; that stretch reads YPWLTWLVIGFITFVLVVMLF. The Periplasmic segment spans residues 424–428; it reads RPAQQ. The helical transmembrane segment at 429–449 threads the bilayer; that stretch reads LEVISTGLLAIGIICTVPIMA. The Cytoplasmic segment spans residues 450-466; the sequence is RWKKLVLWQKTPVHNTR.

This sequence belongs to the amino acid-polyamine-organocation (APC) superfamily. Amino acid transporter (AAT) (TC 2.A.3.1) family. In terms of assembly, monomer.

It is found in the cell inner membrane. The catalysed reaction is 4-aminobutanoate(in) + H(+)(in) = 4-aminobutanoate(out) + H(+)(out). Its pathway is amino-acid degradation; 4-aminobutanoate degradation. Its activity is regulated as follows. Uptake is stimulated by ammonium sulfate and abolished by 2,4-dinitrophenol. Is affected both topologically and kinetically by phospholipid composition of the membrane. In cells lacking phosphatidylethanolamine (PE), the N-terminal hairpin is inverted relative to the membrane and the rate of GABA transport is reduced by more than 99%. In terms of biological role, transporter for gamma-aminobutyrate (GABA). Transport is driven by the membrane potential. Can also transport a number of GABA analogs such as nipecotic acid or muscimol. The protein is Gamma-aminobutyric acid permease of Escherichia coli (strain K12).